Consider the following 611-residue polypeptide: Threonine--tRNA ligase (611 aa).

The tract at residues 1 to 25 (MAGPDRKPVSSAAATTPAPSAPVVL) is disordered. A compositionally biased stretch (low complexity) spans 9–24 (VSSAAATTPAPSAPVV). The interval 209 to 502 (DHRRIGKDLD…MTENYAGDYP (294 aa)) is catalytic. Zn(2+)-binding residues include C302, H353, and H479.

It belongs to the class-II aminoacyl-tRNA synthetase family. As to quaternary structure, homodimer. Zn(2+) serves as cofactor.

The protein localises to the cytoplasm. It catalyses the reaction tRNA(Thr) + L-threonine + ATP = L-threonyl-tRNA(Thr) + AMP + diphosphate + H(+). Catalyzes the attachment of threonine to tRNA(Thr) in a two-step reaction: L-threonine is first activated by ATP to form Thr-AMP and then transferred to the acceptor end of tRNA(Thr). Also edits incorrectly charged L-seryl-tRNA(Thr). In Parasynechococcus marenigrum (strain WH8102), this protein is Threonine--tRNA ligase.